A 431-amino-acid polypeptide reads, in one-letter code: UDP-N-acetylglucosamine 1-carboxyvinyltransferase (431 aa).

Residue 22–23 participates in phosphoenolpyruvate binding; sequence KN. A UDP-N-acetyl-alpha-D-glucosamine-binding site is contributed by Arg102. Residue Cys126 is the Proton donor of the active site. Cys126 is subject to 2-(S-cysteinyl)pyruvic acid O-phosphothioketal. Residues 131–135, Asp316, and Ile338 each bind UDP-N-acetyl-alpha-D-glucosamine; that span reads RPVDL.

This sequence belongs to the EPSP synthase family. MurA subfamily.

The protein localises to the cytoplasm. It catalyses the reaction phosphoenolpyruvate + UDP-N-acetyl-alpha-D-glucosamine = UDP-N-acetyl-3-O-(1-carboxyvinyl)-alpha-D-glucosamine + phosphate. The protein operates within cell wall biogenesis; peptidoglycan biosynthesis. In terms of biological role, cell wall formation. Adds enolpyruvyl to UDP-N-acetylglucosamine. The chain is UDP-N-acetylglucosamine 1-carboxyvinyltransferase from Beijerinckia indica subsp. indica (strain ATCC 9039 / DSM 1715 / NCIMB 8712).